The chain runs to 245 residues: Uridylate kinase (245 aa).

18-21 provides a ligand contact to ATP; it reads KLSG. Gly-60 serves as a coordination point for UMP. The ATP site is built by Gly-61 and Arg-65. Residues Asp-80 and 141–148 each bind UMP; that span reads TGNPFFTT. Thr-168, Tyr-174, and Asp-177 together coordinate ATP.

It belongs to the UMP kinase family. In terms of assembly, homohexamer.

The protein resides in the cytoplasm. It catalyses the reaction UMP + ATP = UDP + ADP. Its pathway is pyrimidine metabolism; CTP biosynthesis via de novo pathway; UDP from UMP (UMPK route): step 1/1. With respect to regulation, inhibited by UTP. In terms of biological role, catalyzes the reversible phosphorylation of UMP to UDP. This chain is Uridylate kinase, found in Pseudomonas paraeruginosa (strain DSM 24068 / PA7) (Pseudomonas aeruginosa (strain PA7)).